Here is a 73-residue protein sequence, read N- to C-terminus: uncharacterized protein (73 aa).

This is an uncharacterized protein from Ureaplasma parvum serovar 3 (strain ATCC 700970).